Consider the following 58-residue polypeptide: UPF0434 protein NT01EI_2448 (58 aa).

It belongs to the UPF0434 family.

This chain is UPF0434 protein NT01EI_2448, found in Edwardsiella ictaluri (strain 93-146).